A 729-amino-acid polypeptide reads, in one-letter code: Solute carrier family 15 member 2 (729 aa).

The tract at residues Met1 to Pro35 is disordered. Residues Met1–Arg57 lie on the Cytoplasmic side of the membrane. Ser9 carries the post-translational modification Phosphoserine. At Thr12 the chain carries Phosphothreonine. Ser28 carries the post-translational modification Phosphoserine. A helical membrane pass occupies residues Phe58–Asn78. Topologically, residues Glu79–His87 are extracellular. The helical transmembrane segment at Ala88–Leu108 threads the bilayer. Residues Gly109–Thr113 are Cytoplasmic-facing. The helical transmembrane segment at Ile114 to Pro134 threads the bilayer. The Extracellular segment spans residues Ile135–Lys139. Residues Met140–Ile160 form a helical membrane-spanning segment. The Cytoplasmic segment spans residues Lys161 to Tyr183. The helical transmembrane segment at Phe184–Met204 threads the bilayer. Residues Leu205 to Tyr217 are Extracellular-facing. The chain crosses the membrane as a helical span at residues Ala218–Gly238. The Cytoplasmic portion of the chain corresponds to Ser239 to Asp295. A helical membrane pass occupies residues Val296–Leu316. Residues Asp317–Gln343 lie on the Extracellular side of the membrane. The chain crosses the membrane as a helical span at residues Met344–Tyr364. At Arg365 to Met380 the chain is on the cytoplasmic side. The chain crosses the membrane as a helical span at residues Ala381–Ile401. The Extracellular portion of the chain corresponds to Asn402–Gln611. The interval Asn402–Gln611 is extracellular domain (ECD). Asn435, Asn448, Asn528, and Asn587 each carry an N-linked (GlcNAc...) asparagine glycan. A helical membrane pass occupies residues Leu612 to Phe632. Over Ser633 to Ser643 the chain is Cytoplasmic. Residues Val644–Ala664 traverse the membrane as a helical segment. The Extracellular segment spans residues Gln665 to Glu674. A helical membrane pass occupies residues Phe675–Tyr695. The Cytoplasmic segment spans residues Tyr696–Leu729.

Belongs to the major facilitator superfamily. Proton-dependent oligopeptide transporter (POT/PTR) (TC 2.A.17) family. As to quaternary structure, interacts (via extracellular domain region) with trypsin. As to expression, strongly expressed in kidney cortex and medulla. Also detected in brain, lung and spleen. Expressed in choroid plexus.

The protein resides in the apical cell membrane. It is found in the cytoplasmic vesicle. The protein localises to the phagosome membrane. Its subcellular location is the cell membrane. It catalyses the reaction a dipeptide(out) + 2 H(+)(out) = a dipeptide(in) + 2 H(+)(in). The enzyme catalyses glycyl-L-leucine(out) + 2 H(+)(out) = glycyl-L-leucine(in) + 2 H(+)(in). The catalysed reaction is glycyl-L-lysine(out) + 2 H(+)(out) = glycyl-L-lysine(in) + 2 H(+)(in). It carries out the reaction glycyl-L-glutamate(out) + 3 H(+)(out) = glycyl-L-glutamate(in) + 3 H(+)(in). It catalyses the reaction L-alanyl-L-alanine(out) + 2 H(+)(out) = L-alanyl-L-alanine(in) + 2 H(+)(in). The enzyme catalyses an L-amino acid tripeptide(out) + 2 H(+)(out) = an L-amino acid tripeptide(in) + 2 H(+)(in). The catalysed reaction is N-acetyl-D-muramoyl-L-alanyl-D-isoglutamine(out) + 3 H(+)(out) = N-acetyl-D-muramoyl-L-alanyl-D-isoglutamine(in) + 3 H(+)(in). It carries out the reaction carnosine(out) + 2 H(+)(out) = carnosine(in) + 2 H(+)(in). Functionally, proton-coupled amino-acid transporter that transports oligopeptides of 2 to 4 amino acids with a preference for dipeptides. Transports neutral and anionic dipeptides with a proton to peptide stoichiometry of 2:1 or 3:1. In kidney, involved in the absorption of circulating di- and tripeptides from the glomerular filtrate. Can also transport beta-lactam antibiotics, such as the aminocephalosporin cefadroxil, and other antiviral and anticancer drugs. Transports the dipeptide-like aminopeptidase inhibitor bestatin. Also able to transport carnosine. Involved in innate immunity by promoting the detection of microbial pathogens by NOD-like receptors (NLRs). Mediates transport of bacterial peptidoglycans across the plasma membrane or, in macrophages, the phagosome membrane: catalyzes the transport of certain bacterial peptidoglycans, such as muramyl dipeptide (MDP), the NOD2 ligand. This chain is Solute carrier family 15 member 2, found in Rattus norvegicus (Rat).